The chain runs to 220 residues: Polyadenylate-binding protein 2 (220 aa).

The interval Met-1–Glu-24 is disordered. The stretch at Ala-34 to Gln-74 forms a coiled coil. A necessary for homooligomerization region spans residues Ser-78–Tyr-219. Residues Arg-92–Thr-168 form the RRM domain. Residues Gln-165–Gly-172 carry the Nuclear localization signal motif.

As to quaternary structure, monomer and homooligomer. Binds RNA as a monomer and oligomerizes when bound to poly(A). Forms a complex with cleavage and polyadenylation specificity factor (CPSF) subunits PAPS2, FIPS5, PABN3 and PABN1. Interacts with CSP3.

The protein localises to the nucleus speckle. The protein resides in the cytoplasm. Involved in the 3'-end formation of mRNA precursors (pre-mRNA) by the addition of a poly(A) tail of 200-250 nt to the upstream cleavage product. Stimulates poly(A) polymerase (PAPOLA) conferring processivity on the poly(A) tail elongation reaction and also controls the poly(A) tail length. Increases the affinity of poly(A) polymerase for RNA. Binds to poly(A) and to poly(G) with high affinity. May protect the poly(A) tail from degradation. In Arabidopsis thaliana (Mouse-ear cress), this protein is Polyadenylate-binding protein 2.